The following is a 339-amino-acid chain: Phosphoribosylformylglycinamidine cyclo-ligase (339 aa).

Belongs to the AIR synthase family.

It is found in the cytoplasm. It carries out the reaction 2-formamido-N(1)-(5-O-phospho-beta-D-ribosyl)acetamidine + ATP = 5-amino-1-(5-phospho-beta-D-ribosyl)imidazole + ADP + phosphate + H(+). Its pathway is purine metabolism; IMP biosynthesis via de novo pathway; 5-amino-1-(5-phospho-D-ribosyl)imidazole from N(2)-formyl-N(1)-(5-phospho-D-ribosyl)glycinamide: step 2/2. In Oceanobacillus iheyensis (strain DSM 14371 / CIP 107618 / JCM 11309 / KCTC 3954 / HTE831), this protein is Phosphoribosylformylglycinamidine cyclo-ligase.